We begin with the raw amino-acid sequence, 528 residues long: Putative B3 domain-containing protein REM15 (528 aa).

2 consecutive DNA-binding regions (TF-B3) follow at residues 3-95 (HQHF…LGPS) and 135-231 (CFVA…LPNE). The interval 234–253 (EEANEVSLPEEPESDAERNL) is disordered. DNA-binding regions (TF-B3) lie at residues 279 to 376 (CFVA…IPNE) and 425 to 522 (QSSL…FCSK).

Its subcellular location is the nucleus. The protein is Putative B3 domain-containing protein REM15 (REM15.15) of Arabidopsis thaliana (Mouse-ear cress).